A 129-amino-acid polypeptide reads, in one-letter code: uncharacterized protein (129 aa).

Basic residues predominate over residues 84–98 (QKTVSKKYKSRKGRR). The segment at 84–129 (QKTVSKKYKSRKGRRYTRERNISSEKNKTDKSHKVRVGKIQNINND) is disordered. A compositionally biased stretch (basic and acidic residues) spans 99 to 115 (YTRERNISSEKNKTDKS).

This is an uncharacterized protein from Acanthamoeba polyphaga mimivirus (APMV).